Consider the following 685-residue polypeptide: Galactocerebrosidase (685 aa).

Residues 1 to 42 form the signal peptide; sequence MAEWLLSASWQRRAKAMTAAAGSAGRAAVPLLLCALLAPGGA. Thr-109 provides a ligand contact to substrate. An N-linked (GlcNAc...) asparagine glycan is attached at Asn-143. The substrate site is built by Trp-151 and Asn-197. Glu-198 acts as the Proton donor/acceptor in catalysis. Glu-274 functions as the Nucleophile in the catalytic mechanism. Cys-287 and Cys-394 are disulfide-bonded. An N-linked (GlcNAc...) asparagine glycan is attached at Asn-379. Arg-396 contributes to the substrate binding site. N-linked (GlcNAc...) asparagine glycosylation is found at Asn-403, Asn-556, Asn-559, and Asn-602.

The protein belongs to the glycosyl hydrolase 59 family. In terms of tissue distribution, detected in urine. Detected in testis, brain and placenta (at protein level). Detected in kidney and liver.

The protein resides in the lysosome. The catalysed reaction is a beta-D-galactosyl-(1&lt;-&gt;1')-N-acylsphing-4-enine + H2O = an N-acylsphing-4-enine + D-galactose. It carries out the reaction beta-D-galactosyl-(1&lt;-&gt;1)-sphing-4-enine + H2O = sphing-4-enine + D-galactose. The enzyme catalyses a D-galactosylceramide + H2O = an N-acyl-sphingoid base + D-galactose. Its function is as follows. Hydrolyzes the galactose ester bonds of glycolipids such as galactosylceramide and galactosylsphingosine. Enzyme with very low activity responsible for the lysosomal catabolism of galactosylceramide, a major lipid in myelin, kidney and epithelial cells of small intestine and colon. The polypeptide is Galactocerebrosidase (Homo sapiens (Human)).